Consider the following 154-residue polypeptide: Ribosomal RNA large subunit methyltransferase H (154 aa).

An S-adenosyl-L-methionine-binding site is contributed by Gly102.

It belongs to the RNA methyltransferase RlmH family. In terms of assembly, homodimer.

It is found in the cytoplasm. The catalysed reaction is pseudouridine(1915) in 23S rRNA + S-adenosyl-L-methionine = N(3)-methylpseudouridine(1915) in 23S rRNA + S-adenosyl-L-homocysteine + H(+). Its function is as follows. Specifically methylates the pseudouridine at position 1915 (m3Psi1915) in 23S rRNA. This is Ribosomal RNA large subunit methyltransferase H from Caulobacter sp. (strain K31).